The sequence spans 1387 residues: Magnesium-chelatase subunit ChlH, chloroplastic (1387 aa).

The transit peptide at 1–50 (MSSLVSTPFTTATGVQKKLGAPVPLHSFLLSRRQPAAGAGRGRAAAAAIR) directs the protein to the chloroplast.

Belongs to the Mg-chelatase subunit H family. In terms of assembly, the magnesium chelatase complex is a heterotrimer consisting of subunits CHLI, CHLD and CHLH.

It localises to the plastid. It is found in the chloroplast stroma. The protein resides in the chloroplast membrane. It carries out the reaction protoporphyrin IX + Mg(2+) + ATP + H2O = Mg-protoporphyrin IX + ADP + phosphate + 3 H(+). It participates in porphyrin-containing compound metabolism; chlorophyll biosynthesis. In terms of biological role, involved in chlorophyll biosynthesis. Catalyzes the insertion of magnesium ion into protoporphyrin IX to yield Mg-protoporphyrin IX. The reaction takes place in two steps, with an ATP-dependent activation followed by an ATP-dependent chelation step. May be involved in the plastid-to-nucleus retrograde signaling. In Oryza sativa subsp. indica (Rice), this protein is Magnesium-chelatase subunit ChlH, chloroplastic (CHLH).